The following is a 426-amino-acid chain: Proline--tRNA ligase (426 aa).

This sequence belongs to the class-II aminoacyl-tRNA synthetase family. ProS type 2 subfamily. Homodimer.

It is found in the cytoplasm. The enzyme catalyses tRNA(Pro) + L-proline + ATP = L-prolyl-tRNA(Pro) + AMP + diphosphate. Its function is as follows. Catalyzes the attachment of proline to tRNA(Pro) in a two-step reaction: proline is first activated by ATP to form Pro-AMP and then transferred to the acceptor end of tRNA(Pro). The chain is Proline--tRNA ligase from Ehrlichia ruminantium (strain Gardel).